We begin with the raw amino-acid sequence, 92 residues long: Evasin P942 (92 aa).

Positions 1–26 (MEVKTFAFLQIAVLIALGLHLAPAGS) are cleaved as a signal peptide. Cystine bridges form between C44-C63, C48-C65, and C59-C76. N47 is a glycosylation site (N-linked (GlcNAc...) asparagine). N70 is a glycosylation site (N-linked (GlcNAc...) asparagine).

It localises to the secreted. Functionally, salivary chemokine-binding protein which binds to host chemokines CXCL1, CXCL2, CXCL3, CXCL4, CXCL5, CXCL6, CXCL10, CXCL11 and CXCL13. The sequence is that of Evasin P942 from Ixodes ricinus (Common tick).